The chain runs to 298 residues: Iron/alpha-ketoglutarate-dependent dioxygenase ausO (298 aa).

Fe cation is bound by residues histidine 130, aspartate 132, and histidine 211.

The protein belongs to the PhyH family. In terms of assembly, homodimer. Fe cation serves as cofactor.

Its pathway is secondary metabolite biosynthesis; terpenoid biosynthesis. Functionally, iron/alpha-ketoglutarate-dependent dioxygenase; part of the gene cluster that mediates the biosynthesis of calidodehydroaustin, a fungal meroterpenoid. The first step of the pathway is the synthesis of 3,5-dimethylorsellinic acid by the polyketide synthase ausA. 3,5-dimethylorsellinic acid is then prenylated by the polyprenyl transferase ausN. Further epoxidation by the FAD-dependent monooxygenase ausM and cyclization by the probable terpene cyclase ausL lead to the formation of protoaustinoid A. Protoaustinoid A is then oxidized to spiro-lactone preaustinoid A3 by the combined action of the FAD-binding monooxygenases ausB and ausC, and the dioxygenase ausE. Acid-catalyzed keto-rearrangement and ring contraction of the tetraketide portion of preaustinoid A3 by ausJ lead to the formation of preaustinoid A4. The aldo-keto reductase ausK, with the help of ausH, is involved in the next step by transforming preaustinoid A4 into isoaustinone which is in turn hydroxylated by the P450 monooxygenase ausI to form austinolide. The cytochrome P450 monooxygenase ausG modifies austinolide to austinol. Austinol is further acetylated to austin by the O-acetyltransferase ausP, which spontaneously changes to dehydroaustin. The cytochrome P450 monooxygenase ausR then converts dehydroaustin is into 7-dehydrodehydroaustin. The hydroxylation catalyzed by ausR permits the O-acetyltransferase ausQ to add an additional acetyl group to the molecule, leading to the formation of acetoxydehydroaustin. The short chain dehydrogenase ausT catalyzes the reduction of the double bond present between carbon atoms 1 and 2 to convert 7-dehydrodehydroaustin into 1,2-dihydro-7-hydroxydehydroaustin. AusQ catalyzes not only an acetylation reaction but also the addition of the PKS ausV diketide product to 1,2-dihydro-7-hydroxydehydroaustin, forming precalidodehydroaustin. Finally, the iron/alpha-ketoglutarate-dependent dioxygenase converts precalidodehydroaustin into calidodehydroaustin. In Aspergillus calidoustus, this protein is Iron/alpha-ketoglutarate-dependent dioxygenase ausO.